Here is a 408-residue protein sequence, read N- to C-terminus: Putative odorant receptor 92a (408 aa).

Over 1–52 (MLFRKRKPKSDDEVITFDELTRFPMTFYKTIGEDLYSDRDPNVIRRYLLRFY) the chain is Cytoplasmic. A helical membrane pass occupies residues 53 to 73 (LVLGFLNFNAYVVGEIAYFIV). A topological domain (extracellular) is located at residue H74. The helical transmembrane segment at 75–95 (IMSTTTLLEATAVAPCIGFSF) threads the bilayer. The Cytoplasmic segment spans residues 96 to 144 (MADFKQFGLTVNRKRLVRLLDDLKEIFPLDLEAQRKYNVSFYRKHMNRV). A helical transmembrane segment spans residues 145-165 (MTLFTILCMTYTSSFSFYPAI). Residues 166–209 (KSTIKYYLMGSEIFERNYGFHILFPYDAETDLTVYWFSYWGLAH) are Extracellular-facing. Residues 210–230 (CAYVAGVSYVCVDLLLIATIT) traverse the membrane as a helical segment. Residues 231 to 276 (QLTMHFNFIANDLEAYEGGDHTDEENIKYLHNLVVYHARALDLSEE) lie on the Cytoplasmic side of the membrane. A helical membrane pass occupies residues 277-301 (VNNIFSFLILWNFIAASLVICFAGF). The Extracellular portion of the chain corresponds to 302–310 (QITASNVED). Residues 311-331 (IVLYFIFFSASLVQVFVVCYY) form a helical membrane-spanning segment. The Cytoplasmic segment spans residues 332–378 (GDEMISSSSRIGHSAFNQNWLPCSTKYKRILQFIIARSQKPASIRPP). A helical transmembrane segment spans residues 379–399 (TFPPISFNTFMKVISMSYQFF). Residues 400 to 408 (ALLRTTYYG) lie on the Extracellular side of the membrane.

Belongs to the insect chemoreceptor superfamily. Heteromeric odorant receptor channel (TC 1.A.69) family. Or49a subfamily. In terms of assembly, interacts with Orco. Complexes exist early in the endomembrane system in olfactory sensory neurons (OSNs), coupling these complexes to the conserved ciliary trafficking pathway.

Its subcellular location is the cell membrane. Its function is as follows. Odorant receptor which mediates acceptance or avoidance behavior, depending on its substrates. The odorant receptor repertoire encodes a large collection of odor stimuli that vary widely in identity, intensity, and duration. May form a complex with Orco to form odorant-sensing units, providing sensitive and prolonged odorant signaling and calcium permeability. In Drosophila melanogaster (Fruit fly), this protein is Putative odorant receptor 92a (Or92a).